Reading from the N-terminus, the 239-residue chain is Leucine rich adaptor protein 1 (239 aa).

LRR repeat units lie at residues 55–83 (LGDK…LVTL) and 93–114 (LLEE…QYSL). Residues 107–118 (LTSSQYSLTGGS) are compositionally biased toward low complexity. Positions 107-140 (LTSSQYSLTGGSPERSRRGSWDSLPDTSSTDRLD) are disordered. Residues S118, S126, and S129 each carry the phosphoserine modification.

In terms of assembly, forms a tripartite complex with CDC42BPA/CDC42BPB and MYO18A acting as an adapter connecting both. Its binding to CDC42BPA/CDC42BPB results in their activation by abolition of their negative autoregulation. Interacts with CDC42BPA and CDC42BPB. Phosphorylated.

The protein localises to the cytoplasm. In terms of biological role, acts as an activator of the canonical NF-kappa-B pathway and drive the production of pro-inflammatory cytokines. Promotes the antigen (Ag)-presenting and priming function of dendritic cells via the canonical NF-kappa-B pathway. In concert with MYO18A and CDC42BPA/CDC42BPB, is involved in modulating lamellar actomyosin retrograde flow that is crucial to cell protrusion and migration. Activates CDC42BPA/CDC42BPB and targets it to actomyosin through its interaction with MYO18A, leading to MYL9/MLC2 phosphorylation and MYH9/MYH10-dependent actomyosin assembly in the lamella. The sequence is that of Leucine rich adaptor protein 1 (Lurap1) from Rattus norvegicus (Rat).